Reading from the N-terminus, the 154-residue chain is Putative pre-16S rRNA nuclease (154 aa).

Belongs to the YqgF nuclease family.

Its subcellular location is the cytoplasm. In terms of biological role, could be a nuclease involved in processing of the 5'-end of pre-16S rRNA. The chain is Putative pre-16S rRNA nuclease from Rickettsia rickettsii (strain Iowa).